Here is an 840-residue protein sequence, read N- to C-terminus: Protein translocase subunit SecA (840 aa).

ATP contacts are provided by residues Q85, 103-107, and D492; that span reads GEGKT. Positions 787–821 are disordered; sequence QRERVAKETGASHGGDSQEIKKKPVKKEPKVGRND. The segment covering 802-819 has biased composition (basic and acidic residues); it reads DSQEIKKKPVKKEPKVGR. Positions 823, 825, 834, and 835 each coordinate Zn(2+).

The protein belongs to the SecA family. In terms of assembly, monomer and homodimer. Part of the essential Sec protein translocation apparatus which comprises SecA, SecYEG and auxiliary proteins SecDF. Other proteins may also be involved. Requires Zn(2+) as cofactor.

The protein resides in the cell membrane. It is found in the cytoplasm. It carries out the reaction ATP + H2O + cellular proteinSide 1 = ADP + phosphate + cellular proteinSide 2.. In terms of biological role, part of the Sec protein translocase complex. Interacts with the SecYEG preprotein conducting channel. Has a central role in coupling the hydrolysis of ATP to the transfer of proteins into and across the cell membrane, serving as an ATP-driven molecular motor driving the stepwise translocation of polypeptide chains across the membrane. The sequence is that of Protein translocase subunit SecA from Clostridium perfringens (strain SM101 / Type A).